A 352-amino-acid polypeptide reads, in one-letter code: C-C chemokine receptor type 5 (352 aa).

At 1–30 the chain is on the extracellular side; sequence MDYQVSSPTYDIDYYTSEPCQKIKVKQIAA. Tyr3 is subject to Sulfotyrosine. Residues Ser6 and Ser7 are each glycosylated (O-linked (GalNAc...) serine). A sulfotyrosine mark is found at Tyr10, Tyr14, and Tyr15. Disulfide bonds link Cys20/Cys269 and Cys101/Cys178. Residues 31 to 58 traverse the membrane as a helical segment; sequence RLLPPLYSLVFIFGFVGNILVVLILINC. Topologically, residues 59–68 are cytoplasmic; that stretch reads KRLKSMTDIY. Residues 69–89 traverse the membrane as a helical segment; that stretch reads LLNLAISDLLFLLTVPFWAHY. The Extracellular portion of the chain corresponds to 90–102; it reads AAAQWDFGNTMCQ. The helical transmembrane segment at 103-124 threads the bilayer; the sequence is LLTGLYFIGFFSGIFFIILLTI. The Cytoplasmic segment spans residues 125–141; the sequence is DRYLAIVHAVFALKART. The helical transmembrane segment at 142-166 threads the bilayer; it reads VTFGVVTSVITWVVAVFASLPRIIF. At 167 to 198 the chain is on the extracellular side; the sequence is TRSQREGLHYTCSSHFPYSQYQFWKNFQTLKI. Residues 199–218 form a helical membrane-spanning segment; sequence VILGLVLPLLVMVICYSGIL. The Cytoplasmic segment spans residues 219–235; sequence KTLLRCRNDKKRHRAVR. The chain crosses the membrane as a helical span at residues 236-260; it reads LIFTIMIVYFLFWAPYNIVLLLNTF. Residues 261–277 are Extracellular-facing; sequence QEFFGLNNCSSSNRLDQ. The helical transmembrane segment at 278 to 301 threads the bilayer; it reads AMQVTETLGMTHCCINPIIYAFVG. The Cytoplasmic portion of the chain corresponds to 302–352; sequence EKFRNYLLVFFQKHIAKRFCKCCSIFQQDAPERASSVYTRSTGEQETSVGL. Residues Cys321, Cys323, and Cys324 are each lipidated (S-palmitoyl cysteine). Ser336, Ser337, Ser342, and Ser349 each carry phosphoserine; by BARK1.

The protein belongs to the G-protein coupled receptor 1 family. In terms of assembly, interacts with PRAF2. Efficient ligand binding to CCL3/MIP-1alpha and CCL4/MIP-1beta requires sulfation, O-glycosylation and sialic acid modifications. Glycosylation on Ser-6 is required for efficient binding of CCL4. Interacts with GRK2. Interacts with ARRB1 and ARRB2. Interacts with CNIH4. Interacts with S100A4; this interaction stimulates T-lymphocyte chemotaxis. Sulfated on at least 2 of the N-terminal tyrosines. Sulfation is required for efficient binding of the chemokines, CCL3 and CCL4. In terms of processing, palmitoylation in the C-terminal is important for cell surface expression. Post-translationally, phosphorylation on serine residues in the C-terminal is stimulated by binding CC chemokines especially by APO-RANTES. O-glycosylated, but not N-glycosylated. Ser-6 appears to be the major site even if Ser-7 may be also O-glycosylated. Also sialylated glycans present which contribute to chemokine binding. Thr-16 and Ser-17 may also be glycosylated and, if so, with small moieties such as a T-antigen.

The protein localises to the cell membrane. Functionally, receptor for a number of inflammatory CC-chemokines including CCL3/MIP-1-alpha, CCL4/MIP-1-beta and RANTES and subsequently transduces a signal by increasing the intracellular calcium ion level. May play a role in the control of granulocytic lineage proliferation or differentiation. Participates in T-lymphocyte migration to the infection site by acting as a chemotactic receptor. This Chlorocebus sabaeus (Green monkey) protein is C-C chemokine receptor type 5 (CCR5).